A 162-amino-acid polypeptide reads, in one-letter code: MKGFTATLFLWTLIFPSCSGGGGGKAWPTHVVCSDSGLEVLYQSCDPLQDFGFSVEKCSKQLKSNINIRFGIILREDIKELFLDLALMSQGSSVLNFSYPICEAALPKFSFCGRRKGEQIYYAGPVNNPEFTIPQGEYQVLLELYTEKRSTVACANATIMCS.

The signal sequence occupies residues 1–20; it reads MKGFTATLFLWTLIFPSCSG. Intrachain disulfides connect Cys33–Cys58, Cys45–Cys154, and Cys102–Cys112. The N-linked (GlcNAc...) asparagine glycan is linked to Asn96. The N-linked (GlcNAc...) asparagine glycan is linked to Asn156.

In terms of assembly, M-shaped tetramer of two CD180-LY86 heterodimers. As to expression, highly expressed in B-cells, monocytes and tonsil.

The protein resides in the secreted. It localises to the extracellular space. In terms of biological role, may cooperate with CD180 and TLR4 to mediate the innate immune response to bacterial lipopolysaccharide (LPS) and cytokine production. Important for efficient CD180 cell surface expression. The polypeptide is Lymphocyte antigen 86 (LY86) (Homo sapiens (Human)).